We begin with the raw amino-acid sequence, 55 residues long: Hirustasin (55 aa).

Disulfide bonds link C6-C17, C11-C22, C24-C44, C29-C48, and C33-C50. In terms of domain architecture, Antistasin-like spans 24–50; that stretch reads CNEVHCRIRCKYGLKKDENGCEYPCSC.

It belongs to the protease inhibitor I15 (antistasin) family.

It localises to the secreted. Acts as an inhibitor of tissue kallikrein, trypsin, chymotrypsin and neutrophil cathepsin G. This chain is Hirustasin, found in Hirudo medicinalis (Medicinal leech).